Reading from the N-terminus, the 291-residue chain is uncharacterized protein (291 aa).

The 192-residue stretch at 5-196 (GVFSGGGVKG…LSNFPIWLFS (192 aa)) folds into the PNPLA domain. The short motif at 9 to 14 (GGGVKG) is the GXGXXG element. The helical transmembrane segment at 34–50 (VAGTSAGAIIAAFIASG) threads the bilayer. The GXSXG motif lies at 36-40 (GTSAG). The active-site Nucleophile is the S38. D183 serves as the catalytic Proton acceptor. A DGA/G motif is present at residues 183 to 185 (DGG).

The protein resides in the cell membrane. Its function is as follows. Probable lipid hydrolase. This is an uncharacterized protein from Bacillus subtilis (strain 168).